A 284-amino-acid chain; its full sequence is Orotidine 5'-phosphate decarboxylase (284 aa).

Substrate is bound by residues aspartate 42, lysine 64 to histidine 66, aspartate 96 to threonine 105, tyrosine 237, and arginine 255. Lysine 98 functions as the Proton donor in the catalytic mechanism.

This sequence belongs to the OMP decarboxylase family.

It catalyses the reaction orotidine 5'-phosphate + H(+) = UMP + CO2. It participates in pyrimidine metabolism; UMP biosynthesis via de novo pathway; UMP from orotate: step 2/2. This is Orotidine 5'-phosphate decarboxylase (URA3) from Magnusiomyces magnusii (Yeast).